Reading from the N-terminus, the 709-residue chain is Polyribonucleotide nucleotidyltransferase (709 aa).

Aspartate 487 and aspartate 493 together coordinate Mg(2+). The KH domain maps to 554–613 (PRIHTMKISSDKIKDVIGKGGAVIRALCEETGTTIEIEDDGTIKIAATEGAAAKEAIRRI). Residues 623–691 (GKIYPGKVMR…RQGRIRLSIK (69 aa)) enclose the S1 motif domain.

It belongs to the polyribonucleotide nucleotidyltransferase family. As to quaternary structure, component of the RNA degradosome, which is a multiprotein complex involved in RNA processing and mRNA degradation. Mg(2+) serves as cofactor.

It is found in the cytoplasm. It carries out the reaction RNA(n+1) + phosphate = RNA(n) + a ribonucleoside 5'-diphosphate. Functionally, involved in mRNA degradation. Catalyzes the phosphorolysis of single-stranded polyribonucleotides processively in the 3'- to 5'-direction. This Aliivibrio salmonicida (strain LFI1238) (Vibrio salmonicida (strain LFI1238)) protein is Polyribonucleotide nucleotidyltransferase.